The following is a 131-amino-acid chain: Superoxide dismutase [Ni] (131 aa).

A propeptide spanning residues 1–14 (MLSRLFAPKVKVSA) is cleaved from the precursor. Ni(2+)-binding residues include H15, C16, and C20.

The protein belongs to the nickel superoxide dismutase family. In terms of assembly, homohexamer. The hexameric protein has roughly the shape of a hollow sphere with an outer diameter of 72 Angstroms and a large inner cavity. It depends on Ni(2+) as a cofactor.

It is found in the cytoplasm. It catalyses the reaction 2 superoxide + 2 H(+) = H2O2 + O2. The protein is Superoxide dismutase [Ni] (sodN) of Streptomyces seoulensis.